Consider the following 205-residue polypeptide: Large ribosomal subunit protein uL3 (205 aa).

This sequence belongs to the universal ribosomal protein uL3 family. As to quaternary structure, part of the 50S ribosomal subunit. Forms a cluster with proteins L14 and L19.

One of the primary rRNA binding proteins, it binds directly near the 3'-end of the 23S rRNA, where it nucleates assembly of the 50S subunit. In Porphyromonas gingivalis (strain ATCC 33277 / DSM 20709 / CIP 103683 / JCM 12257 / NCTC 11834 / 2561), this protein is Large ribosomal subunit protein uL3.